The chain runs to 358 residues: Pyruvate dehydrogenase E1 component subunit alpha (358 aa).

As to quaternary structure, heterodimer of an alpha and a beta chain. The cofactor is thiamine diphosphate.

It catalyses the reaction N(6)-[(R)-lipoyl]-L-lysyl-[protein] + pyruvate + H(+) = N(6)-[(R)-S(8)-acetyldihydrolipoyl]-L-lysyl-[protein] + CO2. In terms of biological role, the pyruvate dehydrogenase complex catalyzes the overall conversion of pyruvate to acetyl-CoA and CO(2). It contains multiple copies of three enzymatic components: pyruvate dehydrogenase (E1), dihydrolipoamide acetyltransferase (E2) and lipoamide dehydrogenase (E3). This Mycoplasma genitalium (strain ATCC 33530 / DSM 19775 / NCTC 10195 / G37) (Mycoplasmoides genitalium) protein is Pyruvate dehydrogenase E1 component subunit alpha (pdhA).